Consider the following 283-residue polypeptide: Elongation factor Ts (283 aa).

Residues 80–83 (TDFV) form an involved in Mg(2+) ion dislocation from EF-Tu region.

This sequence belongs to the EF-Ts family.

It localises to the cytoplasm. Functionally, associates with the EF-Tu.GDP complex and induces the exchange of GDP to GTP. It remains bound to the aminoacyl-tRNA.EF-Tu.GTP complex up to the GTP hydrolysis stage on the ribosome. In Klebsiella pneumoniae (strain 342), this protein is Elongation factor Ts.